Consider the following 341-residue polypeptide: L-threonine 3-dehydrogenase (341 aa).

Cys38 lines the Zn(2+) pocket. Active-site charge relay system residues include Thr40 and His43. Positions 63, 64, 93, 96, 99, and 107 each coordinate Zn(2+). NAD(+) is bound by residues Ile175, Asp195, Arg200, 262 to 264 (LGI), and 286 to 287 (IY).

The protein belongs to the zinc-containing alcohol dehydrogenase family. As to quaternary structure, homotetramer. Requires Zn(2+) as cofactor.

It localises to the cytoplasm. The catalysed reaction is L-threonine + NAD(+) = (2S)-2-amino-3-oxobutanoate + NADH + H(+). It functions in the pathway amino-acid degradation; L-threonine degradation via oxydo-reductase pathway; glycine from L-threonine: step 1/2. Catalyzes the NAD(+)-dependent oxidation of L-threonine to 2-amino-3-ketobutyrate. This chain is L-threonine 3-dehydrogenase, found in Colwellia psychrerythraea (strain 34H / ATCC BAA-681) (Vibrio psychroerythus).